The sequence spans 331 residues: NADH-cytochrome b5 reductase 2 (331 aa).

A helical transmembrane segment spans residues 36–56 (VGILIASAVGMAGFGTYFMFG). The FAD-binding FR-type domain maps to 80 to 185 (KGFVSLQLDD…KGPLPKYEWS (106 aa)). Residue 188 to 223 (KHPHVAMIAGGTGITPMYQIMRAIFKNPADKTKVTL) participates in FAD binding.

It belongs to the flavoprotein pyridine nucleotide cytochrome reductase family. It depends on FAD as a cofactor.

The protein localises to the mitochondrion outer membrane. The enzyme catalyses 2 Fe(III)-[cytochrome b5] + NADH = 2 Fe(II)-[cytochrome b5] + NAD(+) + H(+). In terms of biological role, may mediate the reduction of outer membrane cytochrome b5. The protein is NADH-cytochrome b5 reductase 2 (MCR1) of Pyricularia oryzae (strain 70-15 / ATCC MYA-4617 / FGSC 8958) (Rice blast fungus).